Consider the following 139-residue polypeptide: Probable disulfide formation protein C 2 (139 aa).

The helical transmembrane segment at 6-25 threads the bilayer; it reads KYHIAIAWMIATSAMLISLF. C35 and C38 are joined by a disulfide. 2 helical membrane passes run 40–59 and 66–83; these read YQRMAMYPLVLILGIGMYRK and YAFPFTCIGLILSVYQIT. The cysteines at positions 95 and 101 are disulfide-linked. Residues 110 to 133 form a helical membrane-spanning segment; that stretch reads GFISIPMLSFIGFLVIIILIYIES.

The protein belongs to the DsbB family. BdbC subfamily.

The protein localises to the cell membrane. Required for disulfide bond formation in some proteins. The chain is Probable disulfide formation protein C 2 (bdbC2) from Bacillus cereus (strain ATCC 10987 / NRS 248).